Reading from the N-terminus, the 195-residue chain is Ras-related protein Rab-31 (195 aa).

Residues Gly-16, Gly-18, Lys-19, Ser-20, Ser-21, Asp-32, and His-33 each contribute to the GTP site. Ser-20 contacts Mg(2+). Short sequence motifs (switch) lie at residues His-30–Ser-42 and Ala-63–Ser-79. Ser-36 is subject to Phosphoserine. 6 residues coordinate GTP: Thr-38, Gly-64, Asn-119, Asp-122, Ala-150, and Lys-151. Position 38 (Thr-38) interacts with Mg(2+). 2 S-geranylgeranyl cysteine lipidation sites follow: Cys-194 and Cys-195.

It belongs to the small GTPase superfamily. Rab family. Interacts (in GDP-bound form) with RIN3 and GAPVD1, which function as guanine exchange factors (GEF). Interacts (in GTP-bound form) with EEA1. Interacts with NGFR. Interacts with EGFR. Interacts with OCRL. Interacts (in GTP-bound form) with APPL2; interaction contributes to or enhances recruitment of APPL2 to the phagosomes; interaction enhances Fc-gamma receptor-mediated phagocytosis through PI3K/Akt signaling in macrophages. Mg(2+) serves as cofactor. In terms of tissue distribution, detected in brain astrocytes, spleen and intestine (at protein level).

Its subcellular location is the early endosome. It is found in the golgi apparatus. The protein resides in the trans-Golgi network. The protein localises to the trans-Golgi network membrane. It localises to the cytoplasmic vesicle. Its subcellular location is the phagosome. It is found in the phagosome membrane. It carries out the reaction GTP + H2O = GDP + phosphate + H(+). With respect to regulation, regulated by guanine nucleotide exchange factors (GEFs) including RIN3 and GAPVD1 which promote the exchange of bound GDP for free GTP. Regulated by GTPase activating proteins (GAPs) which increase the GTP hydrolysis activity. Inhibited by GDP dissociation inhibitors (GDIs) which prevent Rab-GDP dissociation. In terms of biological role, the small GTPases Rab are key regulators of intracellular membrane trafficking, from the formation of transport vesicles to their fusion with membranes. Rabs cycle between an inactive GDP-bound form and an active GTP-bound form that is able to recruit to membranes different set of downstream effectors directly responsible for vesicle formation, movement, tethering and fusion. Required for the integrity and for normal function of the Golgi apparatus and the trans-Golgi network. Plays a role in insulin-stimulated translocation of GLUT4 to the cell membrane. Plays a role in the maturation of phagosomes that engulf pathogens, such as S.aureus and Mycobacterium. Plays a role in M6PR transport from the trans-Golgi network to endosomes. Plays a role in the internalization of EGFR from the cell membrane into endosomes. The protein is Ras-related protein Rab-31 of Rattus norvegicus (Rat).